A 336-amino-acid polypeptide reads, in one-letter code: Methionine import ATP-binding protein MetN (336 aa).

One can recognise an ABC transporter domain in the interval isoleucine 2–glycine 254. Residue glycine 34–serine 41 coordinates ATP.

It belongs to the ABC transporter superfamily. Methionine importer (TC 3.A.1.24) family. The complex is composed of two ATP-binding proteins (MetN), two transmembrane proteins (MetI) and a solute-binding protein (MetQ).

The protein localises to the cell inner membrane. The catalysed reaction is L-methionine(out) + ATP + H2O = L-methionine(in) + ADP + phosphate + H(+). It carries out the reaction D-methionine(out) + ATP + H2O = D-methionine(in) + ADP + phosphate + H(+). In terms of biological role, part of the ABC transporter complex MetNIQ involved in methionine import. Responsible for energy coupling to the transport system. The protein is Methionine import ATP-binding protein MetN of Campylobacter jejuni subsp. jejuni serotype O:2 (strain ATCC 700819 / NCTC 11168).